The chain runs to 397 residues: MSESVHTNPSLYSKGMLAVICAQFLSAFGDNALLFATLALMKQLYYPEWSQPVLQMLFVGAYILFAPFVGQFADSFAKGRVMMVANGLKLLGAGCICFGVNPFIGYTLVGIGAAAYSPAKYGILGELTTGDKLVKANGLMESSTIAAILLGSMAGGILADWHVLAALIVCALVYGGAVVANLWIPRLPAARPGQSWRFKPMTHSFFSACRTLWRNGETRFSLMGTSLFWGAGVTLRFLLVIWVPVALGITSNAMPTYLNAMVAVGIVLGAGAAAKLVTLETVSRCMPAGILIGIAVMAFAVQQSLLPAFGLLLLLGVFGGFFIVPLNALLQERGKHSVGAGNAIAVQNLGENVAMLLMLGLYSLAVSVGVPPVAVGIGFGAVFAVAIAALWVWGRRK.

11 helical membrane passes run 16-36, 53-73, 91-111, 139-159, 164-184, 227-247, 253-273, 281-301, 305-325, 352-372, and 373-393; these read MLAV…LLFA, VLQM…GQFA, LGAG…LVGI, LMES…GILA, LAAL…NLWI, LFWG…PVAL, AMPT…AGAA, TVSR…AFAV, LLPA…FIVP, NVAM…GVPP, and VAVG…LWVW.

It belongs to the major facilitator superfamily. LplT (TC 2.A.1.42) family.

The protein localises to the cell inner membrane. Catalyzes the facilitated diffusion of 2-acyl-glycero-3-phosphoethanolamine (2-acyl-GPE) into the cell. In Klebsiella pneumoniae (strain 342), this protein is Lysophospholipid transporter LplT.